A 425-amino-acid chain; its full sequence is MLDQKLIRENPTSVEENLSLRGKVYNISHIHELTVKKKDIDIKISSLQSESKKLSKLIGQEISKSKNNDSPELISLKKKGNEYRIKISELEEKQRILDKEVDDEIYNLPNFPSKNAPIGKDENDNIQVKTWGNPLKDENLKSHWEIGESLNIFDSVKSTKISKSRFVTLIGNGARLERALINFMLDMHTKNGYLELMPPALVNSESLKGSGQLPKFSNESFKCSNDDLWLSPTAEVPLTAFHRNELIDPKQLPIKYVAYSPCFRREAGSYGKDTKGLIRLHQFNKVELYWFCDPTKSLEAHKKITSDAENIFKKLNLPYRIVDICTGDLGFSSSRTFDLEVWLPSSKCYREISSCSNCLDFQARRSSIRSKIDKKNIYLHTLNGSGLAIGRTMAAILENGQQTDGSVKIPDALVPYFGSNFLKNA.

233–235 (TAE) contributes to the L-serine binding site. Position 264 to 266 (264 to 266 (RRE)) interacts with ATP. Glutamate 287 is an L-serine binding site. 351 to 354 (EISS) is a binding site for ATP. Residue serine 385 participates in L-serine binding.

The protein belongs to the class-II aminoacyl-tRNA synthetase family. Type-1 seryl-tRNA synthetase subfamily. As to quaternary structure, homodimer. The tRNA molecule binds across the dimer.

The protein resides in the cytoplasm. The catalysed reaction is tRNA(Ser) + L-serine + ATP = L-seryl-tRNA(Ser) + AMP + diphosphate + H(+). It carries out the reaction tRNA(Sec) + L-serine + ATP = L-seryl-tRNA(Sec) + AMP + diphosphate + H(+). Its pathway is aminoacyl-tRNA biosynthesis; selenocysteinyl-tRNA(Sec) biosynthesis; L-seryl-tRNA(Sec) from L-serine and tRNA(Sec): step 1/1. Catalyzes the attachment of serine to tRNA(Ser). Is also able to aminoacylate tRNA(Sec) with serine, to form the misacylated tRNA L-seryl-tRNA(Sec), which will be further converted into selenocysteinyl-tRNA(Sec). This Prochlorococcus marinus (strain MIT 9215) protein is Serine--tRNA ligase.